Here is a 320-residue protein sequence, read N- to C-terminus: Adhesin MafA 1/4 (320 aa).

The N-terminal stretch at 1–18 is a signal peptide; it reads MRARLLIPILFSVFILSA. C19 carries N-palmitoyl cysteine lipidation. C19 is lipidated: S-diacylglycerol cysteine. Residues 287 to 320 are disordered; sequence NHTGNSAPSVEADNSHEGYGYSDEAVRQHRQGQP.

This sequence belongs to the MafA family.

The protein resides in the cell outer membrane. In Neisseria gonorrhoeae (strain ATCC 700825 / FA 1090), this protein is Adhesin MafA 1/4 (mafA1).